Here is a 91-residue protein sequence, read N- to C-terminus: Cytochrome c-554(547) (91 aa).

Heme c contacts are provided by Cys-15, Cys-18, His-19, and Met-64.

As to quaternary structure, monomer. Binds 1 heme c group covalently per subunit.

The polypeptide is Cytochrome c-554(547) (Halothiobacillus neapolitanus (Thiobacillus neapolitanus)).